Reading from the N-terminus, the 124-residue chain is Non-structural protein 2 (124 aa).

The DLNP; interaction with MAP1B motif lies at 121–124 (DLNP).

Belongs to the pneumovirus non-structural protein 2 family. In terms of assembly, monomer (instable). Homomultimer. Heteromultimer with NS1. Interacts with host RIGI (via N-terminus); this interaction prevents host signaling pathway involved in interferon production. Interacts with host MAP1B/microtubule-associated protein 1B.

The protein localises to the host mitochondrion. Its function is as follows. Plays a major role in antagonizing the type I IFN-mediated antiviral response. Acts cooperatively with NS1 to repress activation and nuclear translocation of host IFN-regulatory factor IRF3. Interacts with the host cytoplasmic sensor of viral nucleic acids RIGI and prevents the interaction with its downstream partner MAVS. Together with NS2, participates in the proteasomal degradation of host STAT2, IRF3, IRF7, TBK1 and RIGI through a NS-degradasome involving CUL2 and Elongin-C. The degradasome requires an intact mitochondrial MAVS. Induces host SOCS1 expression. Induces activation of NF-kappa-B. Suppresses premature apoptosis by an NF-kappa-B-dependent, interferon-independent mechanism promoting continued viral replication. This Human respiratory syncytial virus A (strain A2) protein is Non-structural protein 2 (1B).